Here is a 100-residue protein sequence, read N- to C-terminus: Small ribosomal subunit protein uS14c (100 aa).

It belongs to the universal ribosomal protein uS14 family. In terms of assembly, part of the 30S ribosomal subunit.

It is found in the plastid. It localises to the chloroplast. In terms of biological role, binds 16S rRNA, required for the assembly of 30S particles. The protein is Small ribosomal subunit protein uS14c of Lobularia maritima (Sweet alyssum).